The chain runs to 427 residues: Peptidase B (427 aa).

Mn(2+) is bound by residues Lys195 and Asp200. Lys207 is an active-site residue. Residues Asp218, Asp277, and Glu279 each contribute to the Mn(2+) site. The active site involves Arg281.

Belongs to the peptidase M17 family. In terms of assembly, homohexamer. Mn(2+) serves as cofactor.

Its subcellular location is the cytoplasm. The catalysed reaction is Release of an N-terminal amino acid, Xaa, from a peptide or arylamide. Xaa is preferably Glu or Asp but may be other amino acids, including Leu, Met, His, Cys and Gln.. Probably plays an important role in intracellular peptide degradation. In Escherichia coli O139:H28 (strain E24377A / ETEC), this protein is Peptidase B.